The following is a 212-amino-acid chain: Major fimbrial subunit (212 aa).

Positions 1 to 18 (MKKTLLGSLILLAFATNA) are cleaved as a signal peptide. A disulfide bond links C42 and C82.

The protein belongs to the fimbrial protein family.

The protein localises to the fimbrium. Its function is as follows. Mediates adherence to oropharyngeal epithelial cells. Helps the airway colonization process. The chain is Major fimbrial subunit (hifA) from Haemophilus influenzae.